A 123-amino-acid chain; its full sequence is Small ribosomal subunit protein uS13 (123 aa).

Residues 95 to 123 (GLPVRGQKTKTNARTRKGPKKAVASKKKK) form a disordered region.

It belongs to the universal ribosomal protein uS13 family. As to quaternary structure, part of the 30S ribosomal subunit. Forms a loose heterodimer with protein S19. Forms two bridges to the 50S subunit in the 70S ribosome.

Its function is as follows. Located at the top of the head of the 30S subunit, it contacts several helices of the 16S rRNA. In the 70S ribosome it contacts the 23S rRNA (bridge B1a) and protein L5 of the 50S subunit (bridge B1b), connecting the 2 subunits; these bridges are implicated in subunit movement. Contacts the tRNAs in the A and P-sites. The chain is Small ribosomal subunit protein uS13 from Clostridium acetobutylicum (strain ATCC 824 / DSM 792 / JCM 1419 / IAM 19013 / LMG 5710 / NBRC 13948 / NRRL B-527 / VKM B-1787 / 2291 / W).